A 74-amino-acid polypeptide reads, in one-letter code: Sodium channel neurotoxin MeuNaTxalpha-11 (74 aa).

The N-terminal stretch at 1–7 (LMTGVES) is a signal peptide. The LCN-type CS-alpha/beta domain occupies 9–73 (RDAYIAKPHN…VPIRIPGKCH (65 aa)). 4 disulfides stabilise this stretch: Cys19-Cys72, Cys23-Cys45, Cys31-Cys55, and Cys35-Cys57. Position 74 (Arg74) is a propeptide, removed by a carboxypeptidase.

The protein belongs to the long (4 C-C) scorpion toxin superfamily. Sodium channel inhibitor family. Alpha subfamily. Expressed by the venom gland.

It is found in the secreted. Its function is as follows. Alpha toxins bind voltage-independently at site-3 of sodium channels (Nav) and inhibit the inactivation of the activated channels, thereby blocking neuronal transmission. In Mesobuthus eupeus (Lesser Asian scorpion), this protein is Sodium channel neurotoxin MeuNaTxalpha-11.